We begin with the raw amino-acid sequence, 123 residues long: MKLLLLALPILVLLPQVIPAYGGEKKCWNRSGHCRKQCKDGEAVKETCKNHRACCVPSNEDHRRLPTTSPTPLSDSTPGIIDNILTIRFTTDYFEISSKKDMVEESEAGQGTQTSPPNVHHTS.

Residues 1–19 form the signal peptide; sequence MKLLLLALPILVLLPQVIP. Intrachain disulfides connect Cys-27-Cys-54, Cys-34-Cys-48, and Cys-38-Cys-55. Residues 65–123 constitute a propeptide that is removed on maturation; that stretch reads LPTTSPTPLSDSTPGIIDNILTIRFTTDYFEISSKKDMVEESEAGQGTQTSPPNVHHTS. Residues 100–123 are disordered; sequence KDMVEESEAGQGTQTSPPNVHHTS. Residues 109-123 are compositionally biased toward polar residues; the sequence is GQGTQTSPPNVHHTS.

The protein belongs to the beta-defensin family. In terms of processing, the three-dimensional structure formed by the three intramolecular disulfide bridges is indispensable for antimicrobial activity. High-level and epididymis-specific expression. Most abundant in the epithelium of the caput and is also present in the lumen and bound to sperm.

The protein resides in the secreted. Host defense peptide that exhibits antimicrobial activity against both Gram-negative bacteria, such as E.coli and S.typhimurium, and Gram-positive bacteria, such as S.aureus and B.subtilis. Inhibits cell adhesion of E.coli on intestinal epithelial enterocytes. Causes rapid permeabilization of both the outer and inner membrane of E.coli, leading to morphological alterations on the bacterial surface. Binds to bacterial lipopolysaccharides (LPS) with high affinity, and may thereby be involved in immunoregulation through LPS neutralization. May contribute to epididymal innate immunity and protect the sperm against attack by microorganisms. This chain is Defensin beta 118 (DEFB118), found in Macaca mulatta (Rhesus macaque).